Reading from the N-terminus, the 741-residue chain is Catalase-peroxidase (741 aa).

The signal sequence occupies residues 1–23 (MLKKIVTALGMSGMLLASSNAIA). Positions 102–223 (WHDAGTYRIY…YAATQMGLIY (122 aa)) form a cross-link, tryptophyl-tyrosyl-methioninium (Trp-Tyr) (with M-249). The active-site Proton acceptor is His-103. The tryptophyl-tyrosyl-methioninium (Tyr-Met) (with W-102) cross-link spans 223–249 (YVNPEGPDGKPDIKGAASEIRQAFRAM). His-264 provides a ligand contact to heme b.

Belongs to the peroxidase family. Peroxidase/catalase subfamily. As to quaternary structure, homodimer or homotetramer. It depends on heme b as a cofactor. In terms of processing, formation of the three residue Trp-Tyr-Met cross-link is important for the catalase, but not the peroxidase activity of the enzyme.

It catalyses the reaction H2O2 + AH2 = A + 2 H2O. The enzyme catalyses 2 H2O2 = O2 + 2 H2O. In terms of biological role, bifunctional enzyme with both catalase and broad-spectrum peroxidase activity. This Francisella tularensis subsp. tularensis (strain WY96-3418) protein is Catalase-peroxidase.